A 145-amino-acid chain; its full sequence is Neuromedin-S (145 aa).

The N-terminal stretch at 1 to 27 (MRSEKHLLPLPLLLAICCLGTLHLSSG) is a signal peptide. Propeptides lie at residues 28–89 (FPQS…HEIY) and 92–117 (FLFQ…AEYT). Asn-136 is modified (asparagine amide). A propeptide spanning residues 140-145 (VSINEH) is cleaved from the precursor.

The protein belongs to the NmU family. Expressed by the skin glands.

The protein resides in the secreted. In terms of biological role, stimulates uterine smooth muscle contraction (EC(50)=1.6 nM). Synthetic peptide NmS-17 induces calcium mobilization in CHO cells transfected with either human FM-3/GPR66 (EC(50)=0.085 nM) or FM-4/TGR-1 (EC(50)=0.231 nM) NmU/NmS receptors. The protein is Neuromedin-S (nms) of Bombina maxima (Giant fire-bellied toad).